The chain runs to 322 residues: Mitochondrial thiamine pyrophosphate carrier 1 (322 aa).

3 Solcar repeats span residues 12 to 111 (GSKT…VTLG), 122 to 208 (PAAA…LRLP), and 215 to 310 (PFGS…VLGI). 6 consecutive transmembrane segments (helical) span residues 18-38 (MIAG…LDVV), 92-108 (LMYV…YRSV), 128-148 (FIAG…LDLL), 180-200 (FFQG…IFFA), 221-241 (ASAG…FDLI), and 285-302 (GLTV…VTMW).

It belongs to the mitochondrial carrier (TC 2.A.29) family.

The protein localises to the mitochondrion inner membrane. Mitochondrial transporter that mediates uptake of thiamine pyrophosphate (ThPP) into mitochondria. This is Mitochondrial thiamine pyrophosphate carrier 1 (tpc1) from Botryotinia fuckeliana (strain B05.10) (Noble rot fungus).